A 319-amino-acid chain; its full sequence is DNA-directed RNA polymerases IV and V subunit 3B (319 aa).

N-acetylmethionine is present on methionine 1.

The protein belongs to the archaeal Rpo3/eukaryotic RPB3 RNA polymerase subunit family. In terms of assembly, component of the RNA polymerase IV and V complexes. Interacts with NRPB11, SHH1, GRP23 and NRPD1.

It is found in the nucleus. Its function is as follows. DNA-dependent RNA polymerase catalyzes the transcription of DNA into RNA using the four ribonucleoside triphosphates as substrates. Component of RNA polymerases IV and V which mediate short-interfering RNAs (siRNA) accumulation and subsequent RNA-directed DNA methylation-dependent (RdDM) transcriptional gene silencing (TGS) of endogenous repeated sequences, including transposable elements. This chain is DNA-directed RNA polymerases IV and V subunit 3B (NRPD3B), found in Arabidopsis thaliana (Mouse-ear cress).